We begin with the raw amino-acid sequence, 152 residues long: MAACHRILLLLSVAVASGAAQKPPLTKRGLLEFGGIITCSTGRSPLSYVMYGCYCGLGGKGWPRDKADCCHEHDCCYGEAETLGCQTKTDQYRWKCEDKKVECDDLNDKCEKFLCKCDRDAAKCLEKAPYNQKYLFWPSFMCGSEEPKCSIY.

Positions 1–20 are cleaved as a signal peptide; sequence MAACHRILLLLSVAVASGAA. 8 disulfide bridges follow: Cys39-Cys96, Cys53-Cys142, Cys55-Cys70, Cys69-Cys124, Cys75-Cys149, Cys76-Cys117, Cys85-Cys110, and Cys103-Cys115. Ca(2+)-binding residues include Gly56 and Gly58. His73 is a catalytic residue. Asp74 contacts Ca(2+). The active site involves Asp118.

The protein belongs to the phospholipase A2 family. As to expression, expressed by the venom gland. Heavily expressed in the venom gland transcriptome.

The protein localises to the secreted. The enzyme catalyses a 1,2-diacyl-sn-glycero-3-phosphocholine + H2O = a 1-acyl-sn-glycero-3-phosphocholine + a fatty acid + H(+). Functionally, PA2 catalyzes the calcium-dependent hydrolysis of the 2-acyl groups in 3-sn-phosphoglycerides. The protein is Phospholipase A2 of Meiacanthus atrodorsalis (Forktail blenny).